The sequence spans 403 residues: Sorting nexin-32 (403 aa).

The 149-residue stretch at 20–168 (LQGDSSLQVE…VFLEYGQDLS (149 aa)) folds into the PX domain. Residues 258-335 (NQLRTSFLKL…KARTRNREVR (78 aa)) are a coiled coil.

It belongs to the sorting nexin family.

Functionally, may be involved in several stages of intracellular trafficking. The sequence is that of Sorting nexin-32 (SNX32) from Homo sapiens (Human).